Reading from the N-terminus, the 115-residue chain is Class I hydrophobin 21 (115 aa).

The signal sequence occupies residues 1-20; that stretch reads MFAAPATMLVLAALAALSSA. 4 disulfides stabilise this stretch: Cys-30-Cys-93, Cys-37-Cys-87, Cys-38-Cys-77, and Cys-94-Cys-107.

This sequence belongs to the fungal hydrophobin family. In terms of assembly, self-assembles to form functional amyloid fibrils called rodlets. Self-assembly into fibrillar rodlets occurs spontaneously at hydrophobic:hydrophilic interfaces and the rodlets further associate laterally to form amphipathic monolayers.

The protein resides in the secreted. It localises to the cell wall. Functionally, aerial growth, conidiation, and dispersal of filamentous fungi in the environment rely upon a capability of their secreting small amphipathic proteins called hydrophobins (HPBs) with low sequence identity. Class I can self-assemble into an outermost layer of rodlet bundles on aerial cell surfaces, conferring cellular hydrophobicity that supports fungal growth, development and dispersal; whereas Class II form highly ordered films at water-air interfaces through intermolecular interactions but contribute nothing to the rodlet structure. The chain is Class I hydrophobin 21 from Pleurotus ostreatus (strain PC15) (Oyster mushroom).